The sequence spans 164 residues: Glycine cleavage system H protein, mitochondrial (164 aa).

Residues 1–39 constitute a mitochondrion transit peptide; that stretch reads MAWLVLRRLGPVLAPRCPRLSLRPQVPAVRRLGTGSLLL. Residues 57 to 139 enclose the Lipoyl-binding domain; it reads IGTVGISNFA…YQDGWLIKMT (83 aa). Lysine 98 carries the N6-lipoyllysine modification.

It belongs to the GcvH family. The glycine cleavage system is composed of four proteins: P (GLDC), T (GCST), L (DLD) and H (GCSH). Interacts with GLDC. The cofactor is (R)-lipoate.

It is found in the mitochondrion. Its function is as follows. The glycine cleavage system catalyzes the degradation of glycine. The H protein (GCSH) shuttles the methylamine group of glycine from the P protein (GLDC) to the T protein (GCST). Has a pivotal role in the lipoylation of enzymes involved in cellular energetics such as the mitochondrial dihydrolipoyllysine-residue acetyltransferase component of pyruvate dehydrogenase complex (DLAT), and the mitochondrial dihydrolipoyllysine-residue succinyltransferase component of 2-oxoglutarate dehydrogenase complex (DLST). The polypeptide is Glycine cleavage system H protein, mitochondrial (Gallus gallus (Chicken)).